A 132-amino-acid chain; its full sequence is D-ribose pyranase (132 aa).

His-20 serves as the catalytic Proton donor. Residues Asp-28, His-99, and 121–123 (YSN) contribute to the substrate site.

It belongs to the RbsD / FucU family. RbsD subfamily. As to quaternary structure, homodecamer.

It is found in the cytoplasm. It carries out the reaction beta-D-ribopyranose = beta-D-ribofuranose. The protein operates within carbohydrate metabolism; D-ribose degradation; D-ribose 5-phosphate from beta-D-ribopyranose: step 1/2. In terms of biological role, catalyzes the interconversion of beta-pyran and beta-furan forms of D-ribose. In Streptococcus agalactiae serotype Ia (strain ATCC 27591 / A909 / CDC SS700), this protein is D-ribose pyranase.